Consider the following 382-residue polypeptide: Chorismate synthase (382 aa).

Residues arginine 39 and arginine 45 each contribute to the NADP(+) site. FMN contacts are provided by residues 127-129 (RAS), 245-246 (QA), glycine 290, 305-309 (KPIPT), and arginine 331.

The protein belongs to the chorismate synthase family. Homotetramer. The cofactor is FMNH2.

It catalyses the reaction 5-O-(1-carboxyvinyl)-3-phosphoshikimate = chorismate + phosphate. It functions in the pathway metabolic intermediate biosynthesis; chorismate biosynthesis; chorismate from D-erythrose 4-phosphate and phosphoenolpyruvate: step 7/7. Functionally, catalyzes the anti-1,4-elimination of the C-3 phosphate and the C-6 proR hydrogen from 5-enolpyruvylshikimate-3-phosphate (EPSP) to yield chorismate, which is the branch point compound that serves as the starting substrate for the three terminal pathways of aromatic amino acid biosynthesis. This reaction introduces a second double bond into the aromatic ring system. The chain is Chorismate synthase from Desulfitobacterium hafniense (strain DSM 10664 / DCB-2).